We begin with the raw amino-acid sequence, 341 residues long: Cysteine-rich repeat secretory protein 1 (341 aa).

Positions 1–25 (MFSLPLHQSKLIFLLSFLLIKTLNA) are cleaved as a signal peptide. Gnk2-homologous domains lie at 28 to 131 (TYLL…SRKI) and 136 to 245 (DQGP…ATFL). 4 disulfide bridges follow: cysteine 85–cysteine 94, cysteine 97–cysteine 122, cysteine 199–cysteine 208, and cysteine 211–cysteine 236. Pro residues predominate over residues 247-262 (PPPPPPPPPPPPPPPQ). Residues 247-274 (PPPPPPPPPPPPPPPQRLYGENDTPSSD) are disordered.

This sequence belongs to the cysteine-rich repeat secretory protein family.

The protein localises to the secreted. This chain is Cysteine-rich repeat secretory protein 1 (CRRSP1), found in Arabidopsis thaliana (Mouse-ear cress).